Here is a 288-residue protein sequence, read N- to C-terminus: Lipoyl synthase (288 aa).

Positions 39, 44, 50, 65, 69, 72, and 276 each coordinate [4Fe-4S] cluster. Residues 51 to 265 form the Radical SAM core domain; sequence WGKGTATFMI…KETGLKKGFE (215 aa).

It belongs to the radical SAM superfamily. Lipoyl synthase family. The cofactor is [4Fe-4S] cluster.

The protein resides in the cytoplasm. It carries out the reaction [[Fe-S] cluster scaffold protein carrying a second [4Fe-4S](2+) cluster] + N(6)-octanoyl-L-lysyl-[protein] + 2 oxidized [2Fe-2S]-[ferredoxin] + 2 S-adenosyl-L-methionine + 4 H(+) = [[Fe-S] cluster scaffold protein] + N(6)-[(R)-dihydrolipoyl]-L-lysyl-[protein] + 4 Fe(3+) + 2 hydrogen sulfide + 2 5'-deoxyadenosine + 2 L-methionine + 2 reduced [2Fe-2S]-[ferredoxin]. It participates in protein modification; protein lipoylation via endogenous pathway; protein N(6)-(lipoyl)lysine from octanoyl-[acyl-carrier-protein]: step 2/2. In terms of biological role, catalyzes the radical-mediated insertion of two sulfur atoms into the C-6 and C-8 positions of the octanoyl moiety bound to the lipoyl domains of lipoate-dependent enzymes, thereby converting the octanoylated domains into lipoylated derivatives. The sequence is that of Lipoyl synthase from Bacteroides fragilis (strain YCH46).